The chain runs to 306 residues: UDP-3-O-acyl-N-acetylglucosamine deacetylase (306 aa).

Residues His79, His238, and Asp242 each coordinate Zn(2+). His265 serves as the catalytic Proton donor.

The protein belongs to the LpxC family. The cofactor is Zn(2+).

The enzyme catalyses a UDP-3-O-[(3R)-3-hydroxyacyl]-N-acetyl-alpha-D-glucosamine + H2O = a UDP-3-O-[(3R)-3-hydroxyacyl]-alpha-D-glucosamine + acetate. It participates in glycolipid biosynthesis; lipid IV(A) biosynthesis; lipid IV(A) from (3R)-3-hydroxytetradecanoyl-[acyl-carrier-protein] and UDP-N-acetyl-alpha-D-glucosamine: step 2/6. Catalyzes the hydrolysis of UDP-3-O-myristoyl-N-acetylglucosamine to form UDP-3-O-myristoylglucosamine and acetate, the committed step in lipid A biosynthesis. This is UDP-3-O-acyl-N-acetylglucosamine deacetylase from Shewanella loihica (strain ATCC BAA-1088 / PV-4).